The chain runs to 199 residues: ATP-dependent Clp protease proteolytic subunit 3 (199 aa).

Catalysis depends on serine 101, which acts as the Nucleophile. Histidine 126 is a catalytic residue.

Belongs to the peptidase S14 family. As to quaternary structure, fourteen ClpP subunits assemble into 2 heptameric rings which stack back to back to give a disk-like structure with a central cavity, resembling the structure of eukaryotic proteasomes.

The protein resides in the cytoplasm. The catalysed reaction is Hydrolysis of proteins to small peptides in the presence of ATP and magnesium. alpha-casein is the usual test substrate. In the absence of ATP, only oligopeptides shorter than five residues are hydrolyzed (such as succinyl-Leu-Tyr-|-NHMec, and Leu-Tyr-Leu-|-Tyr-Trp, in which cleavage of the -Tyr-|-Leu- and -Tyr-|-Trp bonds also occurs).. Its function is as follows. Cleaves peptides in various proteins in a process that requires ATP hydrolysis. Has a chymotrypsin-like activity. Plays a major role in the degradation of misfolded proteins. The sequence is that of ATP-dependent Clp protease proteolytic subunit 3 from Synechococcus elongatus (strain ATCC 33912 / PCC 7942 / FACHB-805) (Anacystis nidulans R2).